We begin with the raw amino-acid sequence, 377 residues long: [2-(trimethylamino)ethyl]phosphonate dioxygenase (377 aa).

The interval 95–119 (DTDQSSEVGRTSPDVETWDSSQPAP) is disordered. Residue asparagine 187 participates in [2-(trimethylamino)ethyl]phosphonate binding. Histidine 198 serves as a coordination point for 2-oxoglutarate. Fe(2+) is bound by residues histidine 198 and aspartate 200. Residues aspartate 200, asparagine 201, tyrosine 203, asparagine 286, and arginine 288 each coordinate [2-(trimethylamino)ethyl]phosphonate. The 2-oxoglutarate site is built by histidine 341, arginine 343, and arginine 352. Histidine 341 is a binding site for Fe(2+).

Belongs to the gamma-BBH/TMLD family. Homodimer. Requires Fe(2+) as cofactor. L-ascorbate is required as a cofactor.

It carries out the reaction [2-(trimethylamino)ethyl]phosphonate + 2-oxoglutarate + O2 = [(1R)-1-hydroxy-2-(trimethylamino)ethyl]phosphonate + succinate + CO2. Involved in the degradation of the naturally occurring organophosphonate 2-(trimethylammonio)ethylphosphonate (TMAEP). Catalyzes the hydroxylation of TMAEP to (R)-1-hydroxy-2-(trimethylammonio)ethylphosphonate (OH-TMAEP). Is highly specific for its N-trimethylated substrate. Cannot use gamma-butyrobetaine as substrate. This is [2-(trimethylamino)ethyl]phosphonate dioxygenase from Leisingera caerulea (Phaeobacter caeruleus).